The primary structure comprises 273 residues: Ribosomal RNA small subunit methyltransferase A (273 aa).

S-adenosyl-L-methionine-binding residues include Asn-18, Leu-20, Gly-45, Glu-66, Asp-91, and Asn-113.

It belongs to the class I-like SAM-binding methyltransferase superfamily. rRNA adenine N(6)-methyltransferase family. RsmA subfamily.

It is found in the cytoplasm. It catalyses the reaction adenosine(1518)/adenosine(1519) in 16S rRNA + 4 S-adenosyl-L-methionine = N(6)-dimethyladenosine(1518)/N(6)-dimethyladenosine(1519) in 16S rRNA + 4 S-adenosyl-L-homocysteine + 4 H(+). Its function is as follows. Specifically dimethylates two adjacent adenosines (A1518 and A1519) in the loop of a conserved hairpin near the 3'-end of 16S rRNA in the 30S particle. May play a critical role in biogenesis of 30S subunits. This chain is Ribosomal RNA small subunit methyltransferase A, found in Escherichia fergusonii (strain ATCC 35469 / DSM 13698 / CCUG 18766 / IAM 14443 / JCM 21226 / LMG 7866 / NBRC 102419 / NCTC 12128 / CDC 0568-73).